A 602-amino-acid chain; its full sequence is Arginine--tRNA ligase (602 aa).

Residues 132-142 (ANPTGPLHVGH) carry the 'HIGH' region motif.

It belongs to the class-I aminoacyl-tRNA synthetase family. Monomer.

It localises to the cytoplasm. The enzyme catalyses tRNA(Arg) + L-arginine + ATP = L-arginyl-tRNA(Arg) + AMP + diphosphate. This Cupriavidus metallidurans (strain ATCC 43123 / DSM 2839 / NBRC 102507 / CH34) (Ralstonia metallidurans) protein is Arginine--tRNA ligase.